We begin with the raw amino-acid sequence, 250 residues long: 5-oxoprolinase subunit A (250 aa).

The protein belongs to the LamB/PxpA family. As to quaternary structure, forms a complex composed of PxpA, PxpB and PxpC.

The enzyme catalyses 5-oxo-L-proline + ATP + 2 H2O = L-glutamate + ADP + phosphate + H(+). Functionally, catalyzes the cleavage of 5-oxoproline to form L-glutamate coupled to the hydrolysis of ATP to ADP and inorganic phosphate. The sequence is that of 5-oxoprolinase subunit A from Klebsiella pneumoniae (strain 342).